Reading from the N-terminus, the 289-residue chain is MLIIDNPQQLREKIKQLKQQGSEIAFVPTMGNLHEGHLTLVQAGQKKAAVVIVSIFINPMQFNNAQDLLNYPKTMAQDCEKLAAAGVNIIFTPAASSIYPNGLNAQTYVEVPLLSNCLEGELRPGHFRGMSTIVNKLFNLVQPDYACFGEKDFQQLAIVKQMVSDLGMPIEIIPVATMREKNGLAMSSRNGKLSSLEKQKAPLLAKVMNQLAVDVQAQKTELSILIDDASIILNNAGFNTDAIHIVDAQTLQAVNCHSKEAVILMAAFLGETRLIDNKVVILNHSATKI.

Residue 30 to 37 coordinates ATP; sequence MGNLHEGH. His37 functions as the Proton donor in the catalytic mechanism. Gln61 lines the (R)-pantoate pocket. Residue Gln61 participates in beta-alanine binding. 149–152 contacts ATP; sequence GEKD. A (R)-pantoate-binding site is contributed by Gln155. 186–189 contributes to the ATP binding site; the sequence is MSSR.

This sequence belongs to the pantothenate synthetase family. As to quaternary structure, homodimer.

It localises to the cytoplasm. It catalyses the reaction (R)-pantoate + beta-alanine + ATP = (R)-pantothenate + AMP + diphosphate + H(+). It participates in cofactor biosynthesis; (R)-pantothenate biosynthesis; (R)-pantothenate from (R)-pantoate and beta-alanine: step 1/1. In terms of biological role, catalyzes the condensation of pantoate with beta-alanine in an ATP-dependent reaction via a pantoyl-adenylate intermediate. The sequence is that of Pantothenate synthetase from Psychromonas ingrahamii (strain DSM 17664 / CCUG 51855 / 37).